The following is a 93-amino-acid chain: Small ribosomal subunit protein bS18c (93 aa).

It belongs to the bacterial ribosomal protein bS18 family. Part of the 30S ribosomal subunit.

It is found in the plastid. Its subcellular location is the chloroplast. The sequence is that of Small ribosomal subunit protein bS18c from Pinus koraiensis (Korean pine).